Reading from the N-terminus, the 293-residue chain is 4-hydroxy-tetrahydrodipicolinate synthase (293 aa).

Thr45 is a pyruvate binding site. The Proton donor/acceptor role is filled by Tyr133. Lys161 functions as the Schiff-base intermediate with substrate in the catalytic mechanism. A pyruvate-binding site is contributed by Ile203.

The protein belongs to the DapA family. Homotetramer; dimer of dimers.

The protein localises to the cytoplasm. It catalyses the reaction L-aspartate 4-semialdehyde + pyruvate = (2S,4S)-4-hydroxy-2,3,4,5-tetrahydrodipicolinate + H2O + H(+). It functions in the pathway amino-acid biosynthesis; L-lysine biosynthesis via DAP pathway; (S)-tetrahydrodipicolinate from L-aspartate: step 3/4. In terms of biological role, catalyzes the condensation of (S)-aspartate-beta-semialdehyde [(S)-ASA] and pyruvate to 4-hydroxy-tetrahydrodipicolinate (HTPA). The sequence is that of 4-hydroxy-tetrahydrodipicolinate synthase from Aliivibrio fischeri (strain ATCC 700601 / ES114) (Vibrio fischeri).